Here is a 415-residue protein sequence, read N- to C-terminus: Zona pellucida-like domain-containing protein 1 (415 aa).

Positions 1 to 19 (MEPIWLLLLLAIFTVSVSA) are cleaved as a signal peptide. Residues 20-372 (QFNGYNCDAN…QQFQINSVTS (353 aa)) lie on the Extracellular side of the membrane. One can recognise a ZP domain in the interval 43–320 (YCGVQTITMK…PTCHNRDRRD (278 aa)). Intrachain disulfides connect Cys44–Cys155, Cys79–Cys104, Cys235–Cys296, and Cys255–Cys313. The chain crosses the membrane as a helical span at residues 373-393 (ALISGVVILGATSLSFFIIAL). Residues 394 to 415 (TLLNRKKQNSLVLCGIRNPVFN) lie on the Cytoplasmic side of the membrane.

Post-translationally, proteolytically cleaved before the transmembrane segment to yield the secreted form found in the extracellular matrix of the cupula.

Its subcellular location is the cytoplasmic vesicle membrane. It localises to the secreted. It is found in the extracellular space. The protein localises to the extracellular matrix. Its function is as follows. Glycoprotein which is a component of the gelatinous extracellular matrix in the cupulae of the vestibular organ. This chain is Zona pellucida-like domain-containing protein 1 (zpld1), found in Xenopus laevis (African clawed frog).